Consider the following 149-residue polypeptide: Putative oligosaccharyltransferase complex subunit CG9662 (149 aa).

The Cytoplasmic segment spans residues 1–32 (MIETLYNLPFHILVPPNIKVRRFSIPMPSPMA). Residues 33–53 (VFSVILFSYFLVTGGIIYDVI) traverse the membrane as a helical segment. At 54–83 (VEPPSLGATVDEHGHSRPVAFMPYRVNGQY) the chain is on the extracellular side. Residues 84 to 104 (IMEGLASSFLFTVGGLGFIIM) form a helical membrane-spanning segment. The Cytoplasmic segment spans residues 105-117 (DQTHTPGKTNLNR). A helical transmembrane segment spans residues 118 to 138 (LLLTAMGFIFILVSFFTTWLF). The Extracellular segment spans residues 139–149 (MRMKLPSYLQP).

The protein belongs to the OSTC family. As to quaternary structure, component of the oligosaccharyltransferase (OST) complex.

It localises to the membrane. Its function is as follows. Subunit of the oligosaccharyl transferase (OST) complex that catalyzes the initial transfer of a defined glycan (Glc(3)Man(9)GlcNAc(2) in eukaryotes) from the lipid carrier dolichol-pyrophosphate to an asparagine residue within an Asn-X-Ser/Thr consensus motif in nascent polypeptide chains, the first step in protein N-glycosylation. N-glycosylation occurs cotranslationally and the complex associates with the Sec61 complex at the channel-forming translocon complex that mediates protein translocation across the endoplasmic reticulum (ER). All subunits are required for a maximal enzyme activity. This chain is Putative oligosaccharyltransferase complex subunit CG9662, found in Drosophila melanogaster (Fruit fly).